The following is a 1873-amino-acid chain: Ankyrin repeat domain-containing protein 31 (1873 aa).

Disordered regions lie at residues M1–E27 and E361–T380. Residues E361–E379 show a composition bias toward polar residues. ANK repeat units follow at residues F488 to Q517, A521 to I550, and Y554 to F583. Positions T707 to V740 are disordered. Basic residues predominate over residues I728–R737. ANK repeat units follow at residues R1154 to L1183, A1187 to C1216, and D1220 to Q1249. 4 disordered regions span residues Q1242–D1263, R1449–M1482, F1512–P1549, and C1606–S1634. A compositionally biased stretch (basic and acidic residues) spans K1250 to D1263. Composition is skewed to polar residues over residues E1460–M1482 and N1515–D1525. Over residues R1535 to K1544 the composition is skewed to basic and acidic residues. Positions K1621–S1632 are enriched in polar residues. Residues K1683–Y1778 form the RAMA domain.

As to quaternary structure, interacts with REC114; the interaction is direct. Interacts with IHO1.

The protein localises to the nucleus. The protein resides in the chromosome. Functionally, required for DNA double-strand breaks (DSBs) formation during meiotic recombination. Regulates the spatial and temporal patterns of pre-DSB recombinosome assembly and recombination activity by acting as a scaffold that anchors REC114 and other factors to specific genomic locations, thereby regulating DSB formation. Plays a key role in recombination in the pseudoautosomal regions of sex chromosomes. The chain is Ankyrin repeat domain-containing protein 31 from Homo sapiens (Human).